The sequence spans 462 residues: Siroheme synthase (462 aa).

A precorrin-2 dehydrogenase /sirohydrochlorin ferrochelatase region spans residues 1 to 201; it reads MQFLPLFHKL…GKPEEGERLL (201 aa). NAD(+) contacts are provided by residues 22 to 23 and 43 to 44; these read EV and PE. Position 126 is a phosphoserine (Ser-126). Residues 214–462 form a uroporphyrinogen-III C-methyltransferase region; the sequence is GEVYLVGAGP…AWFEGAQGSL (249 aa). Pro-223 is a binding site for S-adenosyl-L-methionine. Asp-246 serves as the catalytic Proton acceptor. The active-site Proton donor is Lys-268. Residues 299–301, Ile-304, 329–330, Met-381, and Gly-410 each bind S-adenosyl-L-methionine; these read GGD and TA.

The protein in the N-terminal section; belongs to the precorrin-2 dehydrogenase / sirohydrochlorin ferrochelatase family. In the C-terminal section; belongs to the precorrin methyltransferase family.

It carries out the reaction uroporphyrinogen III + 2 S-adenosyl-L-methionine = precorrin-2 + 2 S-adenosyl-L-homocysteine + H(+). It catalyses the reaction precorrin-2 + NAD(+) = sirohydrochlorin + NADH + 2 H(+). The catalysed reaction is siroheme + 2 H(+) = sirohydrochlorin + Fe(2+). It participates in cofactor biosynthesis; adenosylcobalamin biosynthesis; precorrin-2 from uroporphyrinogen III: step 1/1. It functions in the pathway cofactor biosynthesis; adenosylcobalamin biosynthesis; sirohydrochlorin from precorrin-2: step 1/1. The protein operates within porphyrin-containing compound metabolism; siroheme biosynthesis; precorrin-2 from uroporphyrinogen III: step 1/1. Its pathway is porphyrin-containing compound metabolism; siroheme biosynthesis; siroheme from sirohydrochlorin: step 1/1. It participates in porphyrin-containing compound metabolism; siroheme biosynthesis; sirohydrochlorin from precorrin-2: step 1/1. Its function is as follows. Multifunctional enzyme that catalyzes the SAM-dependent methylations of uroporphyrinogen III at position C-2 and C-7 to form precorrin-2 via precorrin-1. Then it catalyzes the NAD-dependent ring dehydrogenation of precorrin-2 to yield sirohydrochlorin. Finally, it catalyzes the ferrochelation of sirohydrochlorin to yield siroheme. The protein is Siroheme synthase of Ectopseudomonas mendocina (strain ymp) (Pseudomonas mendocina).